Consider the following 77-residue polypeptide: MAFLKKSLFLVLFLGLVSLSVCEEEKRENEDEEEQEDDEQSEEKRALWKTIIKGAGKMIGSLAKNLLGSQAQPESEQ.

A signal peptide spans 1–22 (MAFLKKSLFLVLFLGLVSLSVC). 2 consecutive propeptides follow at residues 23-43 (EEEK…QSEE) and 76-77 (EQ).

It belongs to the frog skin active peptide (FSAP) family. Dermaseptin subfamily. Expressed by the skin glands.

The protein resides in the secreted. Its function is as follows. Has antimicrobial activity. Exhibits a bactericidal activity towards several species of mollicutes, firmicutes and gracilicutes. This peptide is membranotropic and it efficiently depolarizes the plasma membrane. This Phyllomedusa bicolor (Two-colored leaf frog) protein is Dermaseptin-B9 (DRG3).